We begin with the raw amino-acid sequence, 306 residues long: MAEKVAVLLGGTSAERDVSLLSGAAVLKGLKEAGIDAHAIDIRDFPAMRLKEEGFDKAFIALHGRGGEDGTLQGVLEFLAIPYTGSGVMASAITMDKLRSKYLWQGCGLPVSPFVALNRAQMDAGLDAQLMTSIDALGLPLFVKPSREGSSVGISRVNQASELQAALQEAFRFDDEVLVEAFLSGPEYTVGVIGTDILPSIRIQTASEFYDYDAKYLSDETQYFCPSGLSADQEAELRELTIAAWRALGCSGWGRVDVMMGADGQFYLLEVNTSPGMTSHSLVPMAANQAGMSFSQLVARILELAD.

The region spanning 101–303 (KYLWQGCGLP…FSQLVARILE (203 aa)) is the ATP-grasp domain. 134 to 189 (IDALGLPLFVKPSREGSSVGISRVNQASELQAALQEAFRFDDEVLVEAFLSGPEYT) is a binding site for ATP. Mg(2+) contacts are provided by D257, E270, and N272.

The protein belongs to the D-alanine--D-alanine ligase family. The cofactor is Mg(2+). Mn(2+) serves as cofactor.

It is found in the cytoplasm. It carries out the reaction 2 D-alanine + ATP = D-alanyl-D-alanine + ADP + phosphate + H(+). It participates in cell wall biogenesis; peptidoglycan biosynthesis. Cell wall formation. This chain is D-alanine--D-alanine ligase, found in Erwinia tasmaniensis (strain DSM 17950 / CFBP 7177 / CIP 109463 / NCPPB 4357 / Et1/99).